A 453-amino-acid chain; its full sequence is GTPase Der (453 aa).

EngA-type G domains lie at P4–P169 and I177–E352. Residues G10 to S17, D57 to L61, N120 to E123, G183 to S190, D230 to I234, and N295 to D298 contribute to the GTP site. The region spanning Q353–K438 is the KH-like domain.

This sequence belongs to the TRAFAC class TrmE-Era-EngA-EngB-Septin-like GTPase superfamily. EngA (Der) GTPase family. In terms of assembly, associates with the 50S ribosomal subunit.

GTPase that plays an essential role in the late steps of ribosome biogenesis. The chain is GTPase Der from Acaryochloris marina (strain MBIC 11017).